The following is a 490-amino-acid chain: Glucose-6-phosphate 1-dehydrogenase (490 aa).

NADP(+) is bound by residues arginine 49, 91-92, and lysine 146; that span reads DV. 4 residues coordinate substrate: histidine 176, lysine 180, glutamate 214, and aspartate 233. Histidine 238 functions as the Proton acceptor in the catalytic mechanism. Substrate-binding residues include lysine 338 and lysine 343.

The protein belongs to the glucose-6-phosphate dehydrogenase family.

The catalysed reaction is D-glucose 6-phosphate + NADP(+) = 6-phospho-D-glucono-1,5-lactone + NADPH + H(+). It functions in the pathway carbohydrate degradation; pentose phosphate pathway; D-ribulose 5-phosphate from D-glucose 6-phosphate (oxidative stage): step 1/3. Functionally, catalyzes the oxidation of glucose 6-phosphate to 6-phosphogluconolactone. This Buchnera aphidicola subsp. Schizaphis graminum (strain Sg) protein is Glucose-6-phosphate 1-dehydrogenase.